Consider the following 375-residue polypeptide: 23S rRNA (uracil(747)-C(5))-methyltransferase RlmC (375 aa).

[4Fe-4S] cluster is bound by residues Cys-3, Cys-11, Cys-14, and Cys-87. Gln-212, Phe-241, Glu-262, and Asn-307 together coordinate S-adenosyl-L-methionine. Cys-334 functions as the Nucleophile in the catalytic mechanism.

Belongs to the class I-like SAM-binding methyltransferase superfamily. RNA M5U methyltransferase family. RlmC subfamily.

It catalyses the reaction uridine(747) in 23S rRNA + S-adenosyl-L-methionine = 5-methyluridine(747) in 23S rRNA + S-adenosyl-L-homocysteine + H(+). Functionally, catalyzes the formation of 5-methyl-uridine at position 747 (m5U747) in 23S rRNA. The polypeptide is 23S rRNA (uracil(747)-C(5))-methyltransferase RlmC (Escherichia coli (strain SE11)).